The primary structure comprises 369 residues: Biglycan (369 aa).

The signal sequence occupies residues 1-16 (MWPLWLVASLLALSQA). Positions 17 to 37 (LPFEQKGFWDFTLDDGLPMLN) are excised as a propeptide. Residues S42 and S48 are each glycosylated (O-linked (Xyl...) (glycosaminoglycan) serine). 2 cysteine pairs are disulfide-bonded: C64–C70 and C68–C77. 12 LRR repeats span residues 83 to 103 (KAVP…NNDI), 104 to 127 (SELR…NNKI), 128 to 151 (SKIH…KNHL), 152 to 172 (VEIP…DNRI), 173 to 196 (RKVP…GNPL), 197 to 221 (ENSG…EAKL), 222 to 242 (TGIP…HNKI), 243 to 266 (QAIE…HNQI), 267 to 290 (RMIE…NNKL), 291 to 313 (SRVP…TNNI), 314 to 343 (TKVG…NNPV), and 344 to 369 (PYWE…NYKK). N-linked (GlcNAc...) asparagine glycosylation is found at N271 and N312. A disulfide bridge connects residues C322 and C355.

It belongs to the small leucine-rich proteoglycan (SLRP) family. SLRP class I subfamily. Homodimer. Forms a ternary complex with MFAP2 and ELN. Post-translationally, the two attached glycosaminoglycan chains can be either chondroitin sulfate or dermatan sulfate.

The protein localises to the secreted. It is found in the extracellular space. Its subcellular location is the extracellular matrix. May be involved in collagen fiber assembly. The polypeptide is Biglycan (BGN) (Canis lupus familiaris (Dog)).